We begin with the raw amino-acid sequence, 189 residues long: Elongation factor P (189 aa).

This sequence belongs to the elongation factor P family.

It is found in the cytoplasm. The protein operates within protein biosynthesis; polypeptide chain elongation. Involved in peptide bond synthesis. Stimulates efficient translation and peptide-bond synthesis on native or reconstituted 70S ribosomes in vitro. Probably functions indirectly by altering the affinity of the ribosome for aminoacyl-tRNA, thus increasing their reactivity as acceptors for peptidyl transferase. This chain is Elongation factor P, found in Pseudomonas savastanoi pv. phaseolicola (strain 1448A / Race 6) (Pseudomonas syringae pv. phaseolicola (strain 1448A / Race 6)).